A 201-amino-acid polypeptide reads, in one-letter code: Probable quinol oxidase subunit 3 (201 aa).

5 consecutive transmembrane segments (helical) span residues 20–40 (LGFWIFLTAEFSLFGTLFATL), 62–82 (LVLIMTFALLISSYTCGISIY), 91–111 (LMMFWMILTVLLGLVFVGFEI), 133–153 (FFILLGTHGAHVSLGIGWIIC), and 172–192 (FIVSLYWHFLDVVWIFIFTAV).

This sequence belongs to the cytochrome c oxidase subunit 3 family.

Its subcellular location is the cell membrane. It catalyses the reaction 2 a quinol + O2 = 2 a quinone + 2 H2O. Catalyzes quinol oxidation with the concomitant reduction of oxygen to water. This is Probable quinol oxidase subunit 3 (qoxC) from Staphylococcus haemolyticus (strain JCSC1435).